Consider the following 173-residue polypeptide: Alpha-crystallin A chain (173 aa).

Met-1 is modified (N-acetylmethionine). Residues Met-1–Glu-63 form a required for complex formation with BFSP1 and BFSP2 region. Gln-6 is subject to Deamidated glutamine; partial. Ser-45 carries the post-translational modification Phosphoserine. Residue Gln-50 is modified to Deamidated glutamine; partial. Positions Leu-52–Glu-164 constitute a sHSP domain. The residue at position 99 (Lys-99) is an N6-acetyllysine. The Zn(2+) site is built by His-100, Glu-102, and His-107. Ser-122 is subject to Phosphoserine. Deamidated asparagine; partial is present on Asn-123. The segment at Pro-144–Ser-173 is disordered. The span at Ser-153–Pro-167 shows a compositional bias: basic and acidic residues. Zn(2+) is bound at residue His-154. The O-linked (GlcNAc) serine glycan is linked to Ser-162.

It belongs to the small heat shock protein (HSP20) family. Heteromer composed of three CRYAA and one CRYAB subunits. Inter-subunit bridging via zinc ions enhances stability, which is crucial as there is no protein turn over in the lens. Can also form homodimers and homotetramers (dimers of dimers) which serve as the building blocks of homooligomers. Within homooligomers, the zinc-binding motif is created from residues of 3 different molecules. His-100 and Glu-102 from one molecule are ligands of the zinc ion, and His-107 and His-154 residues from additional molecules complete the site with tetrahedral coordination geometry. Part of a complex required for lens intermediate filament formation composed of BFSP1, BFSP2 and CRYAA. Post-translationally, acetylation at Lys-99 may increase chaperone activity. In terms of processing, undergoes age-dependent proteolytical cleavage at the C-terminus.

The protein localises to the cytoplasm. The protein resides in the nucleus. Functionally, contributes to the transparency and refractive index of the lens. Acts as a chaperone, preventing aggregation of various proteins under a wide range of stress conditions. Required for the correct formation of lens intermediate filaments as part of a complex composed of BFSP1, BFSP2 and CRYAA. The sequence is that of Alpha-crystallin A chain (CRYAA) from Didelphis virginiana (North American opossum).